An 81-amino-acid chain; its full sequence is ATP synthase subunit c (81 aa).

2 consecutive transmembrane segments (helical) span residues 7-27 (AASV…PGIG) and 57-77 (LAFM…LLFA).

Belongs to the ATPase C chain family. F-type ATPases have 2 components, F(1) - the catalytic core - and F(0) - the membrane proton channel. F(1) has five subunits: alpha(3), beta(3), gamma(1), delta(1), epsilon(1). F(0) has four main subunits: a(1), b(1), b'(1) and c(10-14). The alpha and beta chains form an alternating ring which encloses part of the gamma chain. F(1) is attached to F(0) by a central stalk formed by the gamma and epsilon chains, while a peripheral stalk is formed by the delta, b and b' chains.

It is found in the cellular thylakoid membrane. F(1)F(0) ATP synthase produces ATP from ADP in the presence of a proton or sodium gradient. F-type ATPases consist of two structural domains, F(1) containing the extramembraneous catalytic core and F(0) containing the membrane proton channel, linked together by a central stalk and a peripheral stalk. During catalysis, ATP synthesis in the catalytic domain of F(1) is coupled via a rotary mechanism of the central stalk subunits to proton translocation. Its function is as follows. Key component of the F(0) channel; it plays a direct role in translocation across the membrane. A homomeric c-ring of between 10-14 subunits forms the central stalk rotor element with the F(1) delta and epsilon subunits. The polypeptide is ATP synthase subunit c (Synechococcus sp. (strain CC9902)).